A 95-amino-acid polypeptide reads, in one-letter code: Defensin-1 (95 aa).

Residues 1–19 (MKIYFIVGLLFMAMVAIMA) form the signal peptide. Residues 20–43 (APVEDEFEPLEHFENEERADRHRR) constitute a propeptide that is removed on maturation. Intrachain disulfides connect cysteine 46–cysteine 74, cysteine 60–cysteine 79, and cysteine 64–cysteine 81. Phenylalanine amide is present on phenylalanine 94.

It is found in the secreted. Functionally, found in royal jelly and in hemolymph, potent antibacterial protein against Gram-positive bacteria at low concentration. The protein is Defensin-1 of Apis mellifera carnica (Carniolan honeybee).